A 221-amino-acid chain; its full sequence is MTTQLRVVHLLPLLLACFVQTSPKQETMKMDCHKDEKGTIYDYEAIALNKNEYVPFKQYVGKHILFVNVATYCGLTAQYPELNALQEELKPYGLVVLGFPCNQFGKQEPGDNKEILPGLKYVRPGGGFVPNFQLFEKGDVNGEKEQKVFSFLKHSCPHPSEILGTFKSISWDPVKVHDIRWNFEKFLVGPDGIPVMRWSHRATVSSVKTDILAYLKQFKTK.

The N-terminal stretch at 1–21 (MTTQLRVVHLLPLLLACFVQT) is a signal peptide. The active site involves C73.

The protein belongs to the glutathione peroxidase family. In terms of tissue distribution, epididymis.

It localises to the secreted. It carries out the reaction 2 glutathione + H2O2 = glutathione disulfide + 2 H2O. Protects cells and enzymes from oxidative damage, by catalyzing the reduction of hydrogen peroxide, lipid peroxides and organic hydroperoxide, by glutathione. May constitute a glutathione peroxidase-like protective system against peroxide damage in sperm membrane lipids. The sequence is that of Epididymal secretory glutathione peroxidase (GPX5) from Macaca fascicularis (Crab-eating macaque).